We begin with the raw amino-acid sequence, 91 residues long: RNA-binding protein Hfq (91 aa).

The 60-residue stretch at 9 to 68 folds into the Sm domain; that stretch reads DPYLNALRRERIPVSIYLVNGIKLQGQIESFDQFVILLKNTVNQMVYKHAISTVVPARSV. The disordered stretch occupies residues 69–91; it reads SHHNNNHHTAPTEAVENVETQAE.

Belongs to the Hfq family. As to quaternary structure, homohexamer.

In terms of biological role, RNA chaperone that binds small regulatory RNA (sRNAs) and mRNAs to facilitate mRNA translational regulation in response to envelope stress, environmental stress and changes in metabolite concentrations. Also binds with high specificity to tRNAs. The sequence is that of RNA-binding protein Hfq from Haemophilus influenzae (strain ATCC 51907 / DSM 11121 / KW20 / Rd).